A 378-amino-acid chain; its full sequence is tRNA-specific 2-thiouridylase MnmA (378 aa).

Residues 9–16 and M35 contribute to the ATP site; that span reads GVSGGVDS. Residues 94–96 are interaction with target base in tRNA; the sequence is NPD. C99 serves as the catalytic Nucleophile. Residues C99 and C195 are joined by a disulfide bond. Residue G123 participates in ATP binding. An interaction with tRNA region spans residues 145-147; it reads KDQ. C195 acts as the Cysteine persulfide intermediate in catalysis. Positions 307–308 are interaction with tRNA; that stretch reads RY.

It belongs to the MnmA/TRMU family.

Its subcellular location is the cytoplasm. The catalysed reaction is S-sulfanyl-L-cysteinyl-[protein] + uridine(34) in tRNA + AH2 + ATP = 2-thiouridine(34) in tRNA + L-cysteinyl-[protein] + A + AMP + diphosphate + H(+). Its function is as follows. Catalyzes the 2-thiolation of uridine at the wobble position (U34) of tRNA, leading to the formation of s(2)U34. The protein is tRNA-specific 2-thiouridylase MnmA of Xanthomonas axonopodis pv. citri (strain 306).